We begin with the raw amino-acid sequence, 36 residues long: Photosystem II reaction center protein M (36 aa).

A helical membrane pass occupies residues 5–25; the sequence is ILGVIATALFIIIPTSFLLIL.

Belongs to the PsbM family. As to quaternary structure, PSII is composed of 1 copy each of membrane proteins PsbA, PsbB, PsbC, PsbD, PsbE, PsbF, PsbH, PsbI, PsbJ, PsbK, PsbL, PsbM, PsbT, PsbX, PsbY, PsbZ, Psb30/Ycf12, at least 3 peripheral proteins of the oxygen-evolving complex and a large number of cofactors. It forms dimeric complexes.

The protein resides in the plastid. It localises to the chloroplast thylakoid membrane. One of the components of the core complex of photosystem II (PSII). PSII is a light-driven water:plastoquinone oxidoreductase that uses light energy to abstract electrons from H(2)O, generating O(2) and a proton gradient subsequently used for ATP formation. It consists of a core antenna complex that captures photons, and an electron transfer chain that converts photonic excitation into a charge separation. This subunit is found at the monomer-monomer interface. The protein is Photosystem II reaction center protein M of Chlorella vulgaris (Green alga).